Here is a 369-residue protein sequence, read N- to C-terminus: Maltose/maltodextrin import ATP-binding protein MalK (369 aa).

Positions 4–234 constitute an ABC transporter domain; that stretch reads VQLRNVTKAW…PADRFVAGFI (231 aa). Residue 36-43 coordinates ATP; it reads GPSGCGKS.

It belongs to the ABC transporter superfamily. Maltooligosaccharide importer (TC 3.A.1.1.1) family. In terms of assembly, the complex is composed of two ATP-binding proteins (MalK), two transmembrane proteins (MalG and MalK) and a solute-binding protein (MalE).

The protein resides in the cell inner membrane. The enzyme catalyses D-maltose(out) + ATP + H2O = D-maltose(in) + ADP + phosphate + H(+). Its function is as follows. Part of the ABC transporter complex MalEFGK involved in maltose/maltodextrin import. Responsible for energy coupling to the transport system. The sequence is that of Maltose/maltodextrin import ATP-binding protein MalK from Salmonella choleraesuis (strain SC-B67).